We begin with the raw amino-acid sequence, 613 residues long: Dihydroxy-acid dehydratase (613 aa).

Residue D81 participates in Mg(2+) binding. C122 is a binding site for [2Fe-2S] cluster. Positions 123 and 124 each coordinate Mg(2+). The residue at position 124 (K124) is an N6-carboxylysine. C195 provides a ligand contact to [2Fe-2S] cluster. E491 contacts Mg(2+). Residue S517 is the Proton acceptor of the active site.

The protein belongs to the IlvD/Edd family. In terms of assembly, homodimer. Requires [2Fe-2S] cluster as cofactor. Mg(2+) is required as a cofactor.

It carries out the reaction (2R)-2,3-dihydroxy-3-methylbutanoate = 3-methyl-2-oxobutanoate + H2O. The enzyme catalyses (2R,3R)-2,3-dihydroxy-3-methylpentanoate = (S)-3-methyl-2-oxopentanoate + H2O. The protein operates within amino-acid biosynthesis; L-isoleucine biosynthesis; L-isoleucine from 2-oxobutanoate: step 3/4. It participates in amino-acid biosynthesis; L-valine biosynthesis; L-valine from pyruvate: step 3/4. Functions in the biosynthesis of branched-chain amino acids. Catalyzes the dehydration of (2R,3R)-2,3-dihydroxy-3-methylpentanoate (2,3-dihydroxy-3-methylvalerate) into 2-oxo-3-methylpentanoate (2-oxo-3-methylvalerate) and of (2R)-2,3-dihydroxy-3-methylbutanoate (2,3-dihydroxyisovalerate) into 2-oxo-3-methylbutanoate (2-oxoisovalerate), the penultimate precursor to L-isoleucine and L-valine, respectively. The polypeptide is Dihydroxy-acid dehydratase (Photobacterium profundum (strain SS9)).